Here is a 216-residue protein sequence, read N- to C-terminus: Noggin-1 (216 aa).

Positions 1–18 (MDFPRFLLSAYLLLLSFA) are cleaved as a signal peptide. Asn-55 is a glycosylation site (N-linked (GlcNAc...) asparagine).

This sequence belongs to the noggin family. In terms of assembly, homodimer; disulfide-linked.

Its subcellular location is the secreted. In terms of biological role, inhibitor of bone morphogenetic proteins (BMP) signaling. May play an important role in the dorsoventral patterning of the embryo. The protein is Noggin-1 (nog1) of Danio rerio (Zebrafish).